The following is a 431-amino-acid chain: Chaperone SurA (431 aa).

The signal sequence occupies residues 1–20 (MKNWRTFILGLALCANGALA). PpiC domains are found at residues 171-272 (GAEF…KVND) and 282-382 (VTEV…QLID).

It localises to the periplasm. The catalysed reaction is [protein]-peptidylproline (omega=180) = [protein]-peptidylproline (omega=0). Functionally, chaperone involved in the correct folding and assembly of outer membrane proteins. Recognizes specific patterns of aromatic residues and the orientation of their side chains, which are found more frequently in integral outer membrane proteins. May act in both early periplasmic and late outer membrane-associated steps of protein maturation. This chain is Chaperone SurA, found in Sodalis glossinidius (strain morsitans).